A 358-amino-acid chain; its full sequence is GTPase Obg (358 aa).

In terms of domain architecture, Obg spans 1–159; sequence MKFVDEVTIR…RNLHLELRLL (159 aa). Positions 160-334 constitute an OBG-type G domain; it reads ADVGLLGMPN…LAQDVMNRLE (175 aa). GTP contacts are provided by residues 166-173, 191-195, 213-216, 284-287, and 315-317; these read GMPNAGKS, FTTLY, DIPG, NKLD, and SAL. Mg(2+) is bound by residues Ser173 and Thr193. A disordered region spans residues 337–358; the sequence is DEEAREAGERARREQRQEEGPE. Positions 341 to 358 are enriched in basic and acidic residues; that stretch reads REAGERARREQRQEEGPE.

This sequence belongs to the TRAFAC class OBG-HflX-like GTPase superfamily. OBG GTPase family. Monomer. It depends on Mg(2+) as a cofactor.

The protein resides in the cytoplasm. Functionally, an essential GTPase which binds GTP, GDP and possibly (p)ppGpp with moderate affinity, with high nucleotide exchange rates and a fairly low GTP hydrolysis rate. Plays a role in control of the cell cycle, stress response, ribosome biogenesis and in those bacteria that undergo differentiation, in morphogenesis control. This Alkalilimnicola ehrlichii (strain ATCC BAA-1101 / DSM 17681 / MLHE-1) protein is GTPase Obg.